The following is a 29-amino-acid chain: Mycofactocin precursor peptide (29 aa).

The protein belongs to the mycofactocin precursor peptide family. Post-translationally, the post-translational modifications that lead to mycofactocin involve oxidative decarboxylation of the C-terminal tyrosine residue catalyzed by MftC, introduction of a tyramine-valine cross-link, removal of the modified C-terminal dipeptide by MftE. The released dipeptide then undergoes oxidative deamination by MftD, glycosylation by MftF and methylation by an unknown enzyme.

Precursor peptide that leads to mycofactocin (MFT) after extensive post-translational modifications by enzymes encoded by adjacent genes. Mycofactocin acts as a redox cofactor of nicotinamide-dependent oxidoreductases encoded in the same locus. The sequence is that of Mycofactocin precursor peptide from Mycobacterium tuberculosis (strain ATCC 25618 / H37Rv).